The primary structure comprises 408 residues: Phosphoglycerate kinase (408 aa).

Residues 24–26 (DIN), R40, 63–66 (HQGR), R120, and R160 each bind substrate. Residues E331 and 357–360 (GGHM) contribute to the ATP site.

The protein belongs to the phosphoglycerate kinase family.

It localises to the cytoplasm. The enzyme catalyses (2R)-3-phosphoglycerate + ATP = (2R)-3-phospho-glyceroyl phosphate + ADP. It functions in the pathway carbohydrate degradation; glycolysis; pyruvate from D-glyceraldehyde 3-phosphate: step 2/5. The polypeptide is Phosphoglycerate kinase (pgk) (Saccharolobus solfataricus (strain ATCC 35092 / DSM 1617 / JCM 11322 / P2) (Sulfolobus solfataricus)).